The following is a 521-amino-acid chain: MAP kinase-activated protein kinase mak-1 (521 aa).

Residues 1-12 (MMFEYEEDEDPM) show a composition bias toward acidic residues. Residues 1–36 (MMFEYEEDEDPMEQQKHEEFKHHSTDHSGSPQENPF) form a disordered region. A compositionally biased stretch (basic and acidic residues) spans 13–26 (EQQKHEEFKHHSTD). Positions 144–405 (TISAEIIGIG…IHELMATPLV (262 aa)) constitute a Protein kinase domain. Residues 150–158 (IGIGESGKV) and Lys-173 contribute to the ATP site. Asp-266 acts as the Proton acceptor in catalysis.

This sequence belongs to the protein kinase superfamily. CAMK Ser/Thr protein kinase family. May interact (via protein kinase domain) with unc-22 (via protein kinase and CRD domains). Mg(2+) is required as a cofactor. Autophosphorylated in vitro. As to expression, expressed in body wall muscles (at protein level). Expressed in intestine.

It is found in the cytoplasm. The protein resides in the myofibril. Its subcellular location is the sarcomere. It localises to the a band. It catalyses the reaction L-seryl-[protein] + ATP = O-phospho-L-seryl-[protein] + ADP + H(+). It carries out the reaction L-threonyl-[protein] + ATP = O-phospho-L-threonyl-[protein] + ADP + H(+). Functionally, serine/threonine-protein kinase which may play a role in body wall muscle contraction. May phosphorylate unc-22/twitchin. The chain is MAP kinase-activated protein kinase mak-1 from Caenorhabditis elegans.